The sequence spans 422 residues: Serine hydroxymethyltransferase (422 aa).

Residues leucine 118 and 122 to 124 contribute to the (6S)-5,6,7,8-tetrahydrofolate site; that span reads GHL. Position 227 is an N6-(pyridoxal phosphate)lysine (lysine 227). (6S)-5,6,7,8-tetrahydrofolate-binding positions include glutamate 243 and 351-353; that span reads SPF.

This sequence belongs to the SHMT family. In terms of assembly, homodimer. The cofactor is pyridoxal 5'-phosphate.

The protein localises to the cytoplasm. The catalysed reaction is (6R)-5,10-methylene-5,6,7,8-tetrahydrofolate + glycine + H2O = (6S)-5,6,7,8-tetrahydrofolate + L-serine. Its pathway is one-carbon metabolism; tetrahydrofolate interconversion. It functions in the pathway amino-acid biosynthesis; glycine biosynthesis; glycine from L-serine: step 1/1. Functionally, catalyzes the reversible interconversion of serine and glycine with tetrahydrofolate (THF) serving as the one-carbon carrier. This reaction serves as the major source of one-carbon groups required for the biosynthesis of purines, thymidylate, methionine, and other important biomolecules. Also exhibits THF-independent aldolase activity toward beta-hydroxyamino acids, producing glycine and aldehydes, via a retro-aldol mechanism. In Kosmotoga olearia (strain ATCC BAA-1733 / DSM 21960 / TBF 19.5.1), this protein is Serine hydroxymethyltransferase.